The chain runs to 311 residues: MIKLLFMGTPQFSATVLKGLLDNPAYEILGVVTQPDRAVGRKKDIKVTPVKQLALEHGISIYQPEKLSGSQELIEIMELGADGIITAAFGQFLPTILLDSVSFAINVHASLLPKYRGGAPIHYAIMNGDKEAGVTIMEMIKEMDAGDMVAKASTPILETDNVGTLFEKLAIIGRDLLLDSLPAYLSGELKPIPQDHSQATFSPNISPEQEKLDWTMSDQEVFNHIRGMNPWPVAHTFLEGQRLKIYEAQLAEGEGLPGQVIVKTKKSLVIAAGQGALSLLVVQPAGKPKMAIADFLNGLGRKLEVGDFIGR.

Position 110 to 113 (110 to 113 (SLLP)) interacts with (6S)-5,6,7,8-tetrahydrofolate.

It belongs to the Fmt family.

The catalysed reaction is L-methionyl-tRNA(fMet) + (6R)-10-formyltetrahydrofolate = N-formyl-L-methionyl-tRNA(fMet) + (6S)-5,6,7,8-tetrahydrofolate + H(+). Attaches a formyl group to the free amino group of methionyl-tRNA(fMet). The formyl group appears to play a dual role in the initiator identity of N-formylmethionyl-tRNA by promoting its recognition by IF2 and preventing the misappropriation of this tRNA by the elongation apparatus. This chain is Methionyl-tRNA formyltransferase, found in Streptococcus pyogenes serotype M28 (strain MGAS6180).